Reading from the N-terminus, the 188-residue chain is MDTEYEQVNKPWNELYQETTLGNQLMVNVGMEDPEVPLLPSNFLTKVRVGLSGGYITMRRIRIKIIPLVSRKAGVSGKLYLRDISDTTGRKLHCTESLDLGREIRLTMQHLDFSVSTRSDVPIVFGFEELVSPFLEGRELFSISVRWQFGLSKNCYSLPQSKWKVMYQEDALNVKPSKKKASKTDSSV.

The protein belongs to the tombusvirus/aureusvirus movement protein p22 family. In terms of assembly, interacts with host protein HFI22. In terms of processing, phosphorylated.

It localises to the host membrane. Functionally, transports viral genome to neighboring plant cells directly through plasmosdesmata, without any budding. The movement protein allows efficient cell to cell propagation, by bypassing the host cell wall barrier. This Capsicum annuum (Capsicum pepper) protein is Movement protein.